The chain runs to 400 residues: 1-deoxy-D-xylulose 5-phosphate reductoisomerase (400 aa).

Positions 10, 11, 12, 13, 36, 38, and 124 each coordinate NADPH. A 1-deoxy-D-xylulose 5-phosphate-binding site is contributed by Lys-125. Glu-126 lines the NADPH pocket. Mn(2+) is bound at residue Asp-150. 1-deoxy-D-xylulose 5-phosphate contacts are provided by Ser-151, Glu-152, Ser-186, and His-209. Mn(2+) is bound at residue Glu-152. Gly-215 lines the NADPH pocket. 1-deoxy-D-xylulose 5-phosphate is bound by residues Ser-222, Asn-227, Lys-228, and Glu-231. Glu-231 lines the Mn(2+) pocket.

The protein belongs to the DXR family. Mg(2+) serves as cofactor. Mn(2+) is required as a cofactor.

It carries out the reaction 2-C-methyl-D-erythritol 4-phosphate + NADP(+) = 1-deoxy-D-xylulose 5-phosphate + NADPH + H(+). It functions in the pathway isoprenoid biosynthesis; isopentenyl diphosphate biosynthesis via DXP pathway; isopentenyl diphosphate from 1-deoxy-D-xylulose 5-phosphate: step 1/6. Catalyzes the NADPH-dependent rearrangement and reduction of 1-deoxy-D-xylulose-5-phosphate (DXP) to 2-C-methyl-D-erythritol 4-phosphate (MEP). In Aliivibrio fischeri (strain MJ11) (Vibrio fischeri), this protein is 1-deoxy-D-xylulose 5-phosphate reductoisomerase.